Here is a 175-residue protein sequence, read N- to C-terminus: uncharacterized protein (175 aa).

A run of 2 helical transmembrane segments spans residues 21–41 and 50–70; these read IVLDFPSFLVGCVFTTMMGPI and LVGLITVCKFLVIIGSIVFVI.

It is found in the membrane. This is an uncharacterized protein from Saccharomyces cerevisiae (strain ATCC 204508 / S288c) (Baker's yeast).